The primary structure comprises 333 residues: Phosphate acyltransferase (333 aa).

It belongs to the PlsX family. Homodimer. Probably interacts with PlsY.

The protein resides in the cytoplasm. The catalysed reaction is a fatty acyl-[ACP] + phosphate = an acyl phosphate + holo-[ACP]. It functions in the pathway lipid metabolism; phospholipid metabolism. Functionally, catalyzes the reversible formation of acyl-phosphate (acyl-PO(4)) from acyl-[acyl-carrier-protein] (acyl-ACP). This enzyme utilizes acyl-ACP as fatty acyl donor, but not acyl-CoA. The sequence is that of Phosphate acyltransferase from Thermoanaerobacterium thermosaccharolyticum (strain ATCC 7956 / DSM 571 / NCIMB 9385 / NCA 3814 / NCTC 13789 / WDCM 00135 / 2032) (Clostridium thermosaccharolyticum).